The following is a 294-amino-acid chain: Glucosamine kinase GspK (294 aa).

T12 contacts ATP. D101 serves as a coordination point for substrate. An ATP-binding site is contributed by T122. Residues 139-141 (GRE) and D146 each bind substrate. Residue G202 coordinates ATP.

The protein belongs to the eukaryotic-type N-acetylglucosamine kinase family.

The protein resides in the cytoplasm. It catalyses the reaction D-glucosamine + ATP = D-glucosamine 6-phosphate + ADP + H(+). Functionally, ATP-dependent kinase, which is specific for glucosamine. Does not show kinase activity with any other sugar. The polypeptide is Glucosamine kinase GspK (gspK) (Vibrio cholerae serotype O1 (strain ATCC 39315 / El Tor Inaba N16961)).